The following is a 455-amino-acid chain: Ribulose bisphosphate carboxylase large chain (455 aa).

Lys5 is modified (N6,N6,N6-trimethyllysine). Substrate is bound by residues Asn114 and Thr164. Catalysis depends on Lys166, which acts as the Proton acceptor. Lys168 serves as a coordination point for substrate. Mg(2+) contacts are provided by Lys192, Asp194, and Glu195. Residue Lys192 is modified to N6-carboxylysine. His285 (proton acceptor) is an active-site residue. Residues Arg286, His318, and Ser370 each coordinate substrate.

This sequence belongs to the RuBisCO large chain family. Type I subfamily. Heterohexadecamer of 8 large chains and 8 small chains; disulfide-linked. The disulfide link is formed within the large subunit homodimers. It depends on Mg(2+) as a cofactor. In terms of processing, the disulfide bond which can form in the large chain dimeric partners within the hexadecamer appears to be associated with oxidative stress and protein turnover.

Its subcellular location is the plastid. The protein resides in the chloroplast. It carries out the reaction 2 (2R)-3-phosphoglycerate + 2 H(+) = D-ribulose 1,5-bisphosphate + CO2 + H2O. It catalyses the reaction D-ribulose 1,5-bisphosphate + O2 = 2-phosphoglycolate + (2R)-3-phosphoglycerate + 2 H(+). Functionally, ruBisCO catalyzes two reactions: the carboxylation of D-ribulose 1,5-bisphosphate, the primary event in carbon dioxide fixation, as well as the oxidative fragmentation of the pentose substrate in the photorespiration process. Both reactions occur simultaneously and in competition at the same active site. The sequence is that of Ribulose bisphosphate carboxylase large chain from Lupinus microcarpus (Chick lupine).